Consider the following 278-residue polypeptide: Soluble NSF attachment protein homolog FPV011 (278 aa).

This sequence belongs to the SNAP family.

The chain is Soluble NSF attachment protein homolog FPV011 from Fowlpox virus (strain NVSL) (FPV).